Reading from the N-terminus, the 255-residue chain is Acetylglutamate kinase (255 aa).

Substrate contacts are provided by residues 40–41 (GG), R62, and N153.

This sequence belongs to the acetylglutamate kinase family. ArgB subfamily.

Its subcellular location is the cytoplasm. The catalysed reaction is N-acetyl-L-glutamate + ATP = N-acetyl-L-glutamyl 5-phosphate + ADP. It functions in the pathway amino-acid biosynthesis; L-arginine biosynthesis; N(2)-acetyl-L-ornithine from L-glutamate: step 2/4. Catalyzes the ATP-dependent phosphorylation of N-acetyl-L-glutamate. This Bacillus cereus (strain AH187) protein is Acetylglutamate kinase.